The chain runs to 110 residues: UPF0060 membrane protein Pfl01_4105 (110 aa).

The next 4 helical transmembrane spans lie at 5-25, 28-48, 59-79, and 84-104; these read LWFFLAALFEIAGCFAFWMWL, GKSALWVIPALISLTLFALLL, AYAAYGGIYIIASIGWLAVVE, and LGSDWIGVALCVIGATVILFG.

Belongs to the UPF0060 family.

Its subcellular location is the cell inner membrane. This chain is UPF0060 membrane protein Pfl01_4105, found in Pseudomonas fluorescens (strain Pf0-1).